Consider the following 386-residue polypeptide: S-adenosylmethionine synthase (386 aa).

ATP is bound at residue His16. Asp18 contributes to the Mg(2+) binding site. Position 44 (Glu44) interacts with K(+). L-methionine contacts are provided by Glu57 and Gln100. The interval 100 to 110 is flexible loop; that stretch reads QSRDIAQGVDR. ATP-binding positions include 165-167, Asp240, 246-247, Ala263, and Lys267; these read DAK and RK. An L-methionine-binding site is contributed by Asp240. Lys271 contacts L-methionine.

Belongs to the AdoMet synthase family. In terms of assembly, homotetramer; dimer of dimers. It depends on Mg(2+) as a cofactor. The cofactor is K(+).

It localises to the cytoplasm. The catalysed reaction is L-methionine + ATP + H2O = S-adenosyl-L-methionine + phosphate + diphosphate. The protein operates within amino-acid biosynthesis; S-adenosyl-L-methionine biosynthesis; S-adenosyl-L-methionine from L-methionine: step 1/1. Functionally, catalyzes the formation of S-adenosylmethionine (AdoMet) from methionine and ATP. The overall synthetic reaction is composed of two sequential steps, AdoMet formation and the subsequent tripolyphosphate hydrolysis which occurs prior to release of AdoMet from the enzyme. In Francisella tularensis subsp. holarctica (strain FTNF002-00 / FTA), this protein is S-adenosylmethionine synthase.